Consider the following 476-residue polypeptide: Aspartyl/glutamyl-tRNA(Asn/Gln) amidotransferase subunit B (476 aa).

The protein belongs to the GatB/GatE family. GatB subfamily. Heterotrimer of A, B and C subunits.

The enzyme catalyses L-glutamyl-tRNA(Gln) + L-glutamine + ATP + H2O = L-glutaminyl-tRNA(Gln) + L-glutamate + ADP + phosphate + H(+). The catalysed reaction is L-aspartyl-tRNA(Asn) + L-glutamine + ATP + H2O = L-asparaginyl-tRNA(Asn) + L-glutamate + ADP + phosphate + 2 H(+). Functionally, allows the formation of correctly charged Asn-tRNA(Asn) or Gln-tRNA(Gln) through the transamidation of misacylated Asp-tRNA(Asn) or Glu-tRNA(Gln) in organisms which lack either or both of asparaginyl-tRNA or glutaminyl-tRNA synthetases. The reaction takes place in the presence of glutamine and ATP through an activated phospho-Asp-tRNA(Asn) or phospho-Glu-tRNA(Gln). The chain is Aspartyl/glutamyl-tRNA(Asn/Gln) amidotransferase subunit B from Thermosipho melanesiensis (strain DSM 12029 / CIP 104789 / BI429).